The chain runs to 225 residues: Ribonuclease 3 (225 aa).

The RNase III domain occupies 5–127 (MNKLTSKLGY…IIGAIYLDSD (123 aa)). Residue E40 participates in Mg(2+) binding. Residue D44 is part of the active site. Mg(2+) contacts are provided by D113 and E116. E116 is a catalytic residue. Positions 154-224 (DPKTRLQEFL…AETALEQLTN (71 aa)) constitute a DRBM domain.

Belongs to the ribonuclease III family. In terms of assembly, homodimer. It depends on Mg(2+) as a cofactor.

Its subcellular location is the cytoplasm. It carries out the reaction Endonucleolytic cleavage to 5'-phosphomonoester.. In terms of biological role, digests double-stranded RNA. Involved in the processing of primary rRNA transcript to yield the immediate precursors to the large and small rRNAs (23S and 16S). Processes some mRNAs, and tRNAs when they are encoded in the rRNA operon. Processes pre-crRNA and tracrRNA of type II CRISPR loci if present in the organism. In Vibrio cholerae serotype O1 (strain ATCC 39315 / El Tor Inaba N16961), this protein is Ribonuclease 3.